The chain runs to 196 residues: GTP cyclohydrolase 1 (196 aa).

The Zn(2+) site is built by Cys86, His89, and Cys158.

It belongs to the GTP cyclohydrolase I family. As to quaternary structure, homomer.

It carries out the reaction GTP + H2O = 7,8-dihydroneopterin 3'-triphosphate + formate + H(+). It functions in the pathway cofactor biosynthesis; 7,8-dihydroneopterin triphosphate biosynthesis; 7,8-dihydroneopterin triphosphate from GTP: step 1/1. This is GTP cyclohydrolase 1 from Clostridium botulinum (strain Loch Maree / Type A3).